Here is a 313-residue protein sequence, read N- to C-terminus: tRNA dimethylallyltransferase (313 aa).

Position 11-18 (11-18 (GPTACGKT)) interacts with ATP. 13–18 (TACGKT) is a binding site for substrate. 3 interaction with substrate tRNA regions span residues 36–39 (DSAL), 160–164 (QRIGR), and 243–248 (RCVGYR).

It belongs to the IPP transferase family. As to quaternary structure, monomer. It depends on Mg(2+) as a cofactor.

The catalysed reaction is adenosine(37) in tRNA + dimethylallyl diphosphate = N(6)-dimethylallyladenosine(37) in tRNA + diphosphate. Catalyzes the transfer of a dimethylallyl group onto the adenine at position 37 in tRNAs that read codons beginning with uridine, leading to the formation of N6-(dimethylallyl)adenosine (i(6)A). The chain is tRNA dimethylallyltransferase from Neisseria gonorrhoeae (strain ATCC 700825 / FA 1090).